A 347-amino-acid polypeptide reads, in one-letter code: MTNKTSLSYKDAGVDIDAGNDLVDRIKGVVKQTRRPEVMGGLGGFGALCALPQKYREPILVSGTDGVGTKLRLAMDLKRHDTIGIDLVAMCVNDLVVQGAEPLFFLDYFATGKLDVDTAASVITGIAEGCKQSGCALVGGETAEMPGMYHGDDYDVAGFCVGVVEKSEIIDGSKVTPGDVLVALGASGPHSNGYSLVRKILDVSNTNPEQTSLEGKSLADHLLEPTKIYVKSILSLIEQLDIHAIAHLTGGGFWENIPRVLPQGMQAVIDEASWQWPAVFSWLQHAGNVSRHEMYRTFNCGVGMVVALPAELADKAVELLTASGEKAWKIGVIATATEGAEQVIINP.

It belongs to the AIR synthase family.

It localises to the cytoplasm. The enzyme catalyses 2-formamido-N(1)-(5-O-phospho-beta-D-ribosyl)acetamidine + ATP = 5-amino-1-(5-phospho-beta-D-ribosyl)imidazole + ADP + phosphate + H(+). The protein operates within purine metabolism; IMP biosynthesis via de novo pathway; 5-amino-1-(5-phospho-D-ribosyl)imidazole from N(2)-formyl-N(1)-(5-phospho-D-ribosyl)glycinamide: step 2/2. This is Phosphoribosylformylglycinamidine cyclo-ligase from Yersinia pseudotuberculosis serotype O:1b (strain IP 31758).